The primary structure comprises 304 residues: tRNA pseudouridine synthase B (304 aa).

Catalysis depends on Asp38, which acts as the Nucleophile. The 76-residue stretch at 227-302 (LPKVEIYKDF…RIFKLKKVFK (76 aa)) folds into the PUA domain.

The protein belongs to the pseudouridine synthase TruB family. Type 1 subfamily.

The catalysed reaction is uridine(55) in tRNA = pseudouridine(55) in tRNA. Responsible for synthesis of pseudouridine from uracil-55 in the psi GC loop of transfer RNAs. In Thermosipho melanesiensis (strain DSM 12029 / CIP 104789 / BI429), this protein is tRNA pseudouridine synthase B.